The primary structure comprises 130 residues: Small ribosomal subunit protein uS9 (130 aa).

Belongs to the universal ribosomal protein uS9 family.

This Marinobacter nauticus (strain ATCC 700491 / DSM 11845 / VT8) (Marinobacter aquaeolei) protein is Small ribosomal subunit protein uS9.